A 500-amino-acid chain; its full sequence is Phosphatidylserine decarboxylase proenzyme 1, mitochondrial (500 aa).

A mitochondrion; not cleaved when targeted to the endoplasmic reticulum-targeting transit peptide spans 1–48 (MSIMPVKNALAQGRTLLMGRMPAVKFSTRMQLRNRTAVLWNRKFSTRL). An N-linked (GlcNAc...) asparagine glycan is attached at Asn34. Residues 45–79 (STRLFVQQRRSSGEIVDRAKAAAANSGRKQVSMKW) lie on the Mitochondrial matrix side of the membrane. Positions 57-101 (GEIVDRAKAAAANSGRKQVSMKWVVLTSFTIVLGTILLVSRNDST) are enables targeting to the endoplasmic reticulum in addition to mitochondria. The helical transmembrane segment at 80–98 (VVLTSFTIVLGTILLVSRN) threads the bilayer. The Mitochondrial intermembrane portion of the chain corresponds to 99–500 (DSTEEDATEG…LGIIGKNDLK (402 aa)). Catalysis depends on charge relay system; for autoendoproteolytic cleavage activity residues Asp210, His348, and Ser463. Ser463 functions as the Schiff-base intermediate with substrate; via pyruvic acid; for decarboxylase activity in the catalytic mechanism. Ser463 carries the post-translational modification Pyruvic acid (Ser); by autocatalysis. A required for processing and stability region spans residues 475–492 (FKFDVRVGDKVKMGQKLG).

This sequence belongs to the phosphatidylserine decarboxylase family. PSD-B subfamily. Eukaryotic type I sub-subfamily. As to quaternary structure, heterodimer of a large membrane-associated beta subunit and a small pyruvoyl-containing alpha subunit. Requires pyruvate as cofactor. Glycosylated at Asn-34 in the endoplasmic reticulum. In terms of processing, the precursor is imported via the TOM complex into mitochondria, where the N-terminal presequence is cleaved by the matrix-located proteases MPP (MAS1-MAS2) and OCT1. Post-translationally, is synthesized initially as an inactive proenzyme. Formation of the active enzyme involves a self-maturation process in which the active site pyruvoyl group is generated from an internal serine residue via an autocatalytic post-translational modification. Two non-identical subunits are generated from the proenzyme in this reaction, and the pyruvate is formed at the N-terminus of the alpha chain, which is derived from the carboxyl end of the proenzyme. The autoendoproteolytic cleavage occurs by a canonical serine protease mechanism, in which the side chain hydroxyl group of the serine supplies its oxygen atom to form the C-terminus of the beta chain, while the remainder of the serine residue undergoes an oxidative deamination to produce ammonia and the pyruvoyl prosthetic group on the alpha chain. During this reaction, the Ser that is part of the protease active site of the proenzyme becomes the pyruvoyl prosthetic group, which constitutes an essential element of the active site of the mature decarboxylase.

Its subcellular location is the mitochondrion inner membrane. It is found in the lipid droplet. The protein resides in the endoplasmic reticulum membrane. The enzyme catalyses a 1,2-diacyl-sn-glycero-3-phospho-L-serine + H(+) = a 1,2-diacyl-sn-glycero-3-phosphoethanolamine + CO2. It participates in phospholipid metabolism; phosphatidylethanolamine biosynthesis; phosphatidylethanolamine from CDP-diacylglycerol: step 2/2. Catalyzes the formation of phosphatidylethanolamine (PtdEtn) from phosphatidylserine (PtdSer). Plays a central role in phospholipid metabolism and in the interorganelle trafficking of phosphatidylserine. Phosphatidylethanolamine formed in the mitochondria is exported to other membranes to fullfill their requirements for PtdEtn. Required for normal mitochondrial morphology and proper mitochondrial fusion during yeast mating. Involved in lipid droplet biogenesis at the endoplasmic reticulum membrane. Required for induction of mitophagy during nitrogen starvation. Appears to play a specific role in supporting respiratory complex III activity. The protein is Phosphatidylserine decarboxylase proenzyme 1, mitochondrial of Saccharomyces cerevisiae (strain ATCC 204508 / S288c) (Baker's yeast).